The chain runs to 385 residues: Cell division protein FtsZ (385 aa).

GTP is bound by residues 20–24, 107–109, Glu138, Arg142, and Asn186; these read GGGGN and GTG.

This sequence belongs to the FtsZ family. As to quaternary structure, homodimer. Polymerizes to form a dynamic ring structure in a strictly GTP-dependent manner. Interacts directly with several other division proteins.

It localises to the cytoplasm. In terms of biological role, essential cell division protein that forms a contractile ring structure (Z ring) at the future cell division site. The regulation of the ring assembly controls the timing and the location of cell division. One of the functions of the FtsZ ring is to recruit other cell division proteins to the septum to produce a new cell wall between the dividing cells. Binds GTP and shows GTPase activity. In Buchnera aphidicola subsp. Baizongia pistaciae (strain Bp), this protein is Cell division protein FtsZ.